Here is a 75-residue protein sequence, read N- to C-terminus: RNA-binding protein Hfq (75 aa).

Residues Asp-9–Ile-69 enclose the Sm domain.

It belongs to the Hfq family. Homohexamer.

RNA chaperone that binds small regulatory RNA (sRNAs) and mRNAs to facilitate mRNA translational regulation in response to envelope stress, environmental stress and changes in metabolite concentrations. Also binds with high specificity to tRNAs. This chain is RNA-binding protein Hfq, found in Geobacillus kaustophilus (strain HTA426).